A 387-amino-acid chain; its full sequence is Ferrochelatase (387 aa).

Fe cation is bound by residues H196 and E277.

The protein belongs to the ferrochelatase family.

The protein localises to the cytoplasm. It catalyses the reaction heme b + 2 H(+) = protoporphyrin IX + Fe(2+). The protein operates within porphyrin-containing compound metabolism; protoheme biosynthesis; protoheme from protoporphyrin-IX: step 1/1. Functionally, catalyzes the ferrous insertion into protoporphyrin IX. The sequence is that of Ferrochelatase from Trichodesmium erythraeum (strain IMS101).